Reading from the N-terminus, the 177-residue chain is CDP-archaeol synthase (177 aa).

Helical transmembrane passes span 6 to 26 (LFASLWYILPAYVANASACIF), 54 to 74 (CIFGILCGTLVGLIQGILVDF), 90 to 110 (VILAFFLSVGAIVGDAVGSFI), 124 to 144 (LLDQLDFVIGALAFGYIVAPI), and 148 to 168 (MIIIICLFTVFVHLLGNIIAY).

Belongs to the CDP-archaeol synthase family. Mg(2+) is required as a cofactor.

It localises to the cell membrane. The enzyme catalyses 2,3-bis-O-(geranylgeranyl)-sn-glycerol 1-phosphate + CTP + H(+) = CDP-2,3-bis-O-(geranylgeranyl)-sn-glycerol + diphosphate. It participates in membrane lipid metabolism; glycerophospholipid metabolism. Functionally, catalyzes the formation of CDP-2,3-bis-(O-geranylgeranyl)-sn-glycerol (CDP-archaeol) from 2,3-bis-(O-geranylgeranyl)-sn-glycerol 1-phosphate (DGGGP) and CTP. This reaction is the third ether-bond-formation step in the biosynthesis of archaeal membrane lipids. This Methanocaldococcus jannaschii (strain ATCC 43067 / DSM 2661 / JAL-1 / JCM 10045 / NBRC 100440) (Methanococcus jannaschii) protein is CDP-archaeol synthase.